A 262-amino-acid polypeptide reads, in one-letter code: 27 kDa lipoprotein antigen (262 aa).

The signal sequence occupies residues M1–A28. 2 stretches are compositionally biased toward low complexity: residues A28 to T57 and S148 to P158. Disordered stretches follow at residues A28 to A60 and V138 to W171. A lipid anchor (N-palmitoyl cysteine) is attached at C29. The S-diacylglycerol cysteine moiety is linked to residue C29.

Its subcellular location is the cell membrane. In Mycobacterium intracellulare, this protein is 27 kDa lipoprotein antigen (Mi43).